Here is a 515-residue protein sequence, read N- to C-terminus: Bifunctional purine biosynthesis protein PurH (515 aa).

One can recognise an MGS-like domain in the interval 1-145; the sequence is MTKRVLISVS…KNHASVTVVV (145 aa).

This sequence belongs to the PurH family.

It carries out the reaction (6R)-10-formyltetrahydrofolate + 5-amino-1-(5-phospho-beta-D-ribosyl)imidazole-4-carboxamide = 5-formamido-1-(5-phospho-D-ribosyl)imidazole-4-carboxamide + (6S)-5,6,7,8-tetrahydrofolate. The catalysed reaction is IMP + H2O = 5-formamido-1-(5-phospho-D-ribosyl)imidazole-4-carboxamide. The protein operates within purine metabolism; IMP biosynthesis via de novo pathway; 5-formamido-1-(5-phospho-D-ribosyl)imidazole-4-carboxamide from 5-amino-1-(5-phospho-D-ribosyl)imidazole-4-carboxamide (10-formyl THF route): step 1/1. It participates in purine metabolism; IMP biosynthesis via de novo pathway; IMP from 5-formamido-1-(5-phospho-D-ribosyl)imidazole-4-carboxamide: step 1/1. This chain is Bifunctional purine biosynthesis protein PurH, found in Streptococcus pneumoniae (strain 70585).